The primary structure comprises 223 residues: Leucyl/phenylalanyl-tRNA--protein transferase (223 aa).

Belongs to the L/F-transferase family.

It is found in the cytoplasm. The enzyme catalyses N-terminal L-lysyl-[protein] + L-leucyl-tRNA(Leu) = N-terminal L-leucyl-L-lysyl-[protein] + tRNA(Leu) + H(+). It carries out the reaction N-terminal L-arginyl-[protein] + L-leucyl-tRNA(Leu) = N-terminal L-leucyl-L-arginyl-[protein] + tRNA(Leu) + H(+). The catalysed reaction is L-phenylalanyl-tRNA(Phe) + an N-terminal L-alpha-aminoacyl-[protein] = an N-terminal L-phenylalanyl-L-alpha-aminoacyl-[protein] + tRNA(Phe). In terms of biological role, functions in the N-end rule pathway of protein degradation where it conjugates Leu, Phe and, less efficiently, Met from aminoacyl-tRNAs to the N-termini of proteins containing an N-terminal arginine or lysine. This is Leucyl/phenylalanyl-tRNA--protein transferase from Dinoroseobacter shibae (strain DSM 16493 / NCIMB 14021 / DFL 12).